We begin with the raw amino-acid sequence, 386 residues long: Outer membrane protein assembly factor BamB (386 aa).

A signal peptide spans 1 to 25; that stretch reads MMRNSRPGRAWRGAVVLTGLLALSG. Residue Cys-26 is the site of N-palmitoyl cysteine attachment. Residue Cys-26 is the site of S-diacylglycerol cysteine attachment.

Belongs to the BamB family. In terms of assembly, part of the Bam complex.

It localises to the cell outer membrane. Its function is as follows. Part of the outer membrane protein assembly complex, which is involved in assembly and insertion of beta-barrel proteins into the outer membrane. The protein is Outer membrane protein assembly factor BamB of Bordetella pertussis (strain Tohama I / ATCC BAA-589 / NCTC 13251).